A 21-amino-acid polypeptide reads, in one-letter code: IVGGTAADISQFPHQLSLQTT.

Belongs to the peptidase S1 family.

Its subcellular location is the secreted. It localises to the extracellular space. The enzyme catalyses Preferential cleavage: Arg-|-Xaa, Lys-|-Xaa.. This Apis mellifera scutellata (Africanized honey bee) protein is Trypsin.